The sequence spans 196 residues: Spore maturation protein A (196 aa).

The next 4 helical transmembrane spans lie at 1–21 (MVNI…MCNG), 37–57 (AITI…LMKI), 133–153 (ITFL…VIAV), and 163–183 (TDIV…AIII).

The protein localises to the cell membrane. Functionally, involved in spore core dehydration; might be involved in the transport of something into or out of the forespore or could be required for some modification of the cortex peptidoglycan structure. This chain is Spore maturation protein A (spmA), found in Bacillus subtilis (strain 168).